Here is a 277-residue protein sequence, read N- to C-terminus: Large ribosomal subunit protein uL2 (277 aa).

The interval Thr-219–Lys-277 is disordered. Basic and acidic residues predominate over residues Ala-264 to Lys-277.

It belongs to the universal ribosomal protein uL2 family. Part of the 50S ribosomal subunit. Forms a bridge to the 30S subunit in the 70S ribosome.

Functionally, one of the primary rRNA binding proteins. Required for association of the 30S and 50S subunits to form the 70S ribosome, for tRNA binding and peptide bond formation. It has been suggested to have peptidyltransferase activity; this is somewhat controversial. Makes several contacts with the 16S rRNA in the 70S ribosome. The protein is Large ribosomal subunit protein uL2 of Streptococcus sanguinis (strain SK36).